The sequence spans 1283 residues: Peroxisomal ATPase PEX1 (1283 aa).

Residues 346 to 367 (SKTKQNVLSPEKEKQMSEPLDQ) form a disordered region. A Phosphoserine modification is found at Ser354. The span at 355-367 (PEKEKQMSEPLDQ) shows a compositional bias: basic and acidic residues. ATP-binding positions include 599–606 (GGKGSGKS) and 881–888 (GPPGTGKT). Ser1181, Ser1209, and Ser1211 each carry phosphoserine. The segment at 1260-1283 (FQNPKRRKNQSGTMFRPGQKVTLA) is disordered.

It belongs to the AAA ATPase family. In terms of assembly, homooligomer; homooligomerizes in the cytosol, interaction with PEX6 promotes dissociation of the homooligomer. Interacts with PEX6; forming the PEX1-PEX6 AAA ATPase complex, which is composed of a heterohexamer formed by a trimer of PEX1-PEX6 dimers. Interacts indirectly with PEX26, via its interaction with PEX6.

The protein localises to the cytoplasm. It is found in the cytosol. Its subcellular location is the peroxisome membrane. It catalyses the reaction ATP + H2O = ADP + phosphate + H(+). Component of the PEX1-PEX6 AAA ATPase complex, a protein dislocase complex that mediates the ATP-dependent extraction of the PEX5 receptor from peroxisomal membranes, an essential step for PEX5 recycling. Specifically recognizes PEX5 monoubiquitinated at 'Cys-11', and pulls it out of the peroxisome lumen through the PEX2-PEX10-PEX12 retrotranslocation channel. Extraction by the PEX1-PEX6 AAA ATPase complex is accompanied by unfolding of the TPR repeats and release of bound cargo from PEX5. This Homo sapiens (Human) protein is Peroxisomal ATPase PEX1.